We begin with the raw amino-acid sequence, 476 residues long: Protein transport protein Sec61 subunit alpha isoform 2 (476 aa).

Residues 1–32 (MGIKFLEVIKPFCAVLPEIQKPERKIQFREKV) are Cytoplasmic-facing. The chain crosses the membrane as a helical span at residues 33–53 (LWTAITLFIFLVCCQIPLFGI). The Lumenal portion of the chain corresponds to 54–75 (MSSDSADPFYWMRVILASNRGT). Residues 76–96 (LMELGISPIVTSGLIMQLLAG) traverse the membrane as a helical segment. Residues 97–117 (AKIIEVGDTPKDRALFNGAQK) are Cytoplasmic-facing. Residues 118–138 (LFGMIITIGQAIVYVMTGMYG) traverse the membrane as a helical segment. At 139 to 144 (DPAEMG) the chain is on the lumenal side. Residues 145 to 165 (AGICLLIIIQLFVAGLIVLLL) form a helical membrane-spanning segment. Residues 166–172 (DELLQKG) lie on the Cytoplasmic side of the membrane. A helical membrane pass occupies residues 173 to 193 (YGLGSGISLFIATNICETIVW). Residues 194–240 (KASSPTTINTGRGTEFEGAVIALFHLLATRTDKVRALREAFYRQNLP) lie on the Lumenal side of the membrane. The chain crosses the membrane as a helical span at residues 241 to 261 (NLMNLIATVFVFAVVIYFQGF). At 262–288 (RVDLPIKSARYRGQYSSYPIKLFYTSN) the chain is on the cytoplasmic side. Residues 289–309 (IPIILQSALVSNLYVISQMLS) form a helical membrane-spanning segment. The Lumenal segment spans residues 310 to 353 (VRFSGNFLVNLLGQWADVSGGGPARSYPVGGLCYYLSPPESMGA). The helical transmembrane segment at 354-374 (ILEDPVHVVVYIIFMLGSCAF) threads the bilayer. Over 375-420 (FSKTWIEVSGSSAKDVAKQLKEQQMVMRGHRDTSMVHELNRYIPTA) the chain is Cytoplasmic. 2 helical membrane-spanning segments follow: residues 421-441 (AAFGGLCIGALSVLADFLGAI) and 442-462 (GSGTGILLAVTIIYQYFEIFV). Residues 463 to 476 (KEQAEVGGMGALFF) lie on the Cytoplasmic side of the membrane.

The protein belongs to the SecY/SEC61-alpha family. The SEC61 channel-forming translocon complex consists of channel-forming core components SEC61A1, SEC61B and SEC61G and different auxiliary components such as SEC62 and SEC63.

It is found in the endoplasmic reticulum membrane. Component of SEC61 channel-forming translocon complex that mediates transport of signal peptide-containing precursor polypeptides across the endoplasmic reticulum (ER). Forms a ribosome receptor and a gated pore in the ER membrane, both functions required for cotranslational translocation of nascent polypeptides. This is Protein transport protein Sec61 subunit alpha isoform 2 (SEC61A2) from Pongo abelii (Sumatran orangutan).